Here is a 580-residue protein sequence, read N- to C-terminus: Arrestin domain-containing protein A (580 aa).

N-linked (GlcNAc...) asparagine glycosylation is found at Asn27, Asn33, and Asn60. The segment at 31–54 (NVNTTSSHHHHHSNSGNAEVSFNG) is disordered. Disordered regions lie at residues 67–86 (ETHS…EISI) and 95–114 (MTMS…HKES). The helical transmembrane segment at 118–138 (NLSLGGIVGAVVGAVTGGVMI) threads the bilayer. Asn149, Asn341, and Asn342 each carry an N-linked (GlcNAc...) asparagine glycan. Residues 468 to 528 (DEHATACRKC…VCEECYPIAT (61 aa)) form an FYVE-type zinc finger. Cys474, Cys477, Cys490, Cys493, Cys498, Cys501, Cys520, and Cys523 together coordinate Zn(2+).

This sequence belongs to the arrestin family.

The protein localises to the membrane. The sequence is that of Arrestin domain-containing protein A (adcA) from Dictyostelium discoideum (Social amoeba).